The sequence spans 339 residues: Dihydroorotate dehydrogenase (quinone) (339 aa).

Residues 61–65 (AGLDK) and Thr85 each bind FMN. A substrate-binding site is contributed by Lys65. 110 to 114 (NRMGF) contributes to the substrate binding site. The FMN site is built by Asn138 and Asn171. Asn171 serves as a coordination point for substrate. Ser174 functions as the Nucleophile in the catalytic mechanism. Asn176 is a binding site for substrate. FMN contacts are provided by Lys216 and Thr244. 245–246 (NT) provides a ligand contact to substrate. Residues Gly267, Gly296, and 317–318 (YS) contribute to the FMN site.

It belongs to the dihydroorotate dehydrogenase family. Type 2 subfamily. Monomer. FMN serves as cofactor.

The protein localises to the cell membrane. The enzyme catalyses (S)-dihydroorotate + a quinone = orotate + a quinol. It functions in the pathway pyrimidine metabolism; UMP biosynthesis via de novo pathway; orotate from (S)-dihydroorotate (quinone route): step 1/1. Catalyzes the conversion of dihydroorotate to orotate with quinone as electron acceptor. In Saccharophagus degradans (strain 2-40 / ATCC 43961 / DSM 17024), this protein is Dihydroorotate dehydrogenase (quinone).